A 32-amino-acid chain; its full sequence is Delta-conotoxin-like CnVIC (32 aa).

3 cysteine pairs are disulfide-bonded: Cys-3–Cys-18, Cys-10–Cys-22, and Cys-17–Cys-27. 2 positions are modified to 4-hydroxyproline: Pro-6 and Pro-14.

It belongs to the conotoxin O1 superfamily. Expressed by the venom duct.

It localises to the secreted. Functionally, delta-conotoxins bind to site 6 of voltage-gated sodium channels (Nav) and inhibit the inactivation process. This toxin acts on Nav1.2/SCN2A, Nav1.4/SCN4A, Nav1.5/SCN5A (weak activity), Nav1.6/SCN8A (EC(50)=2.5 uM). The polypeptide is Delta-conotoxin-like CnVIC (Conus consors (Singed cone)).